A 293-amino-acid chain; its full sequence is 4-hydroxy-tetrahydrodipicolinate synthase (293 aa).

Thr-46 is a binding site for pyruvate. Residue Tyr-134 is the Proton donor/acceptor of the active site. The active-site Schiff-base intermediate with substrate is Lys-162. A pyruvate-binding site is contributed by Ile-204.

Belongs to the DapA family. Homotetramer; dimer of dimers.

The protein localises to the cytoplasm. The enzyme catalyses L-aspartate 4-semialdehyde + pyruvate = (2S,4S)-4-hydroxy-2,3,4,5-tetrahydrodipicolinate + H2O + H(+). It participates in amino-acid biosynthesis; L-lysine biosynthesis via DAP pathway; (S)-tetrahydrodipicolinate from L-aspartate: step 3/4. Its function is as follows. Catalyzes the condensation of (S)-aspartate-beta-semialdehyde [(S)-ASA] and pyruvate to 4-hydroxy-tetrahydrodipicolinate (HTPA). The sequence is that of 4-hydroxy-tetrahydrodipicolinate synthase from Bdellovibrio bacteriovorus (strain ATCC 15356 / DSM 50701 / NCIMB 9529 / HD100).